We begin with the raw amino-acid sequence, 70 residues long: Palustrin-2ISa (70 aa).

The N-terminal stretch at 1 to 22 (MFTLKKSLLLLFFLGTISLSLC) is a signal peptide. Residues 23–39 (EQERSAEDEGEVIEEEV) constitute a propeptide, removed in mature form. A disulfide bond links Cys64 and Cys70.

Expressed by the skin glands.

It localises to the secreted. In terms of biological role, has antimicrobial activity against Gram-negative bacterium E.coli ATCC 8739 (MIC=100 ug), against Gram positive bacteria S.aureus ATCC 6538 (MIC=25 ug), methicillin-resistant S.aureus ATCC 43300 (MIC=100 ug), B.subtilis ATCC 6633 (MIC=12.5 ug) and against fungus C.albicans ATCC 90028 (MIC=100 ug). The sequence is that of Palustrin-2ISa from Odorrana ishikawae (Ishikawa's frog).